The following is a 205-amino-acid chain: UPF0637 protein OB1420 (205 aa).

The protein belongs to the UPF0637 family.

This Oceanobacillus iheyensis (strain DSM 14371 / CIP 107618 / JCM 11309 / KCTC 3954 / HTE831) protein is UPF0637 protein OB1420.